We begin with the raw amino-acid sequence, 279 residues long: Urease accessory protein UreD (279 aa).

The protein belongs to the UreD family. UreD, UreF and UreG form a complex that acts as a GTP-hydrolysis-dependent molecular chaperone, activating the urease apoprotein by helping to assemble the nickel containing metallocenter of UreC. The UreE protein probably delivers the nickel.

The protein localises to the cytoplasm. Its function is as follows. Required for maturation of urease via the functional incorporation of the urease nickel metallocenter. This is Urease accessory protein UreD from Streptococcus salivarius (strain 57.I).